A 300-amino-acid polypeptide reads, in one-letter code: tRNA-cytidine(32) 2-sulfurtransferase (300 aa).

The PP-loop motif signature appears at 57–62 (SGGKDS). [4Fe-4S] cluster is bound by residues Cys132, Cys135, and Cys223.

It belongs to the TtcA family. In terms of assembly, homodimer. The cofactor is Mg(2+). Requires [4Fe-4S] cluster as cofactor.

It is found in the cytoplasm. The enzyme catalyses cytidine(32) in tRNA + S-sulfanyl-L-cysteinyl-[cysteine desulfurase] + AH2 + ATP = 2-thiocytidine(32) in tRNA + L-cysteinyl-[cysteine desulfurase] + A + AMP + diphosphate + H(+). The protein operates within tRNA modification. Functionally, catalyzes the ATP-dependent 2-thiolation of cytidine in position 32 of tRNA, to form 2-thiocytidine (s(2)C32). The sulfur atoms are provided by the cysteine/cysteine desulfurase (IscS) system. The sequence is that of tRNA-cytidine(32) 2-sulfurtransferase from Xanthomonas campestris pv. campestris (strain B100).